The primary structure comprises 552 residues: Metal transporter Nramp6.1 (552 aa).

Asparagine 11 carries N-linked (GlcNAc...) asparagine glycosylation. The next 7 helical transmembrane spans lie at phenylalanine 55–leucine 75, glutamate 88–alanine 108, cysteine 133–phenylalanine 155, isoleucine 159–glycine 181, lysine 189–methionine 209, isoleucine 238–leucine 258, and tyrosine 275–isoleucine 295. Asparagine 306 carries N-linked (GlcNAc...) asparagine glycosylation. The next 5 membrane-spanning stretches (helical) occupy residues isoleucine 338–glycine 358, leucine 377–serine 397, leucine 402–leucine 422, isoleucine 438–tyrosine 458, and valine 478–leucine 498. The disordered stretch occupies residues proline 511–glutamate 552. A compositionally biased stretch (polar residues) spans asparagine 514–glutamate 523. The span at methionine 535–leucine 545 shows a compositional bias: basic and acidic residues.

Belongs to the NRAMP (TC 2.A.55) family.

It localises to the membrane. Functionally, probable divalent metal transporter. The sequence is that of Metal transporter Nramp6.1 from Populus trichocarpa (Western balsam poplar).